The sequence spans 669 residues: NADH-ubiquinone oxidoreductase chain 5 (669 aa).

The next 15 membrane-spanning stretches (helical) occupy residues 3 to 23 (LLIV…GRFL), 50 to 70 (VALC…SELF), 81 to 100 (LTVI…HIYS), 119 to 139 (IFTF…LFLG), 178 to 198 (LALG…STIF), 211 to 231 (FLFC…VFIG), 253 to 273 (TPVS…FMIA), 286 to 306 (LIVI…TGIL), 322 to 342 (LGYM…FHLM), 377 to 397 (LLPF…GFPF), 423 to 443 (FWLG…LLFL), 464 to 484 (ILMA…GYLA), 522 to 542 (LIPI…NFVV), 628 to 648 (AFVM…WDFI), and 649 to 669 (SFWV…FINI).

Belongs to the complex I subunit 5 family.

Its subcellular location is the mitochondrion inner membrane. It catalyses the reaction a ubiquinone + NADH + 5 H(+)(in) = a ubiquinol + NAD(+) + 4 H(+)(out). Core subunit of the mitochondrial membrane respiratory chain NADH dehydrogenase (Complex I) that is believed to belong to the minimal assembly required for catalysis. Complex I functions in the transfer of electrons from NADH to the respiratory chain. The immediate electron acceptor for the enzyme is believed to be ubiquinone. This Marchantia polymorpha (Common liverwort) protein is NADH-ubiquinone oxidoreductase chain 5 (ND5).